The following is a 97-amino-acid chain: ESAT-6-like protein EsxA (97 aa).

Belongs to the WXG100 family. ESAT-6 subfamily. As to quaternary structure, forms a tight 1:1 complex with EsxB. Forms a complex with EccC and EsxB, probably wholly mediated by EsxB.

It is found in the secreted. Its function is as follows. May help regulate assembly and function of the type VII secretion system (T7SS). EsxA disassembles pre-formed EccC-EsxB multimers, possibly by making EccC-EsxA-EsxB trimers instead of EccC-EsxB-EsxB-EccC tetramers. The polypeptide is ESAT-6-like protein EsxA (Thermomonospora curvata (strain ATCC 19995 / DSM 43183 / JCM 3096 / KCTC 9072 / NBRC 15933 / NCIMB 10081 / Henssen B9)).